A 620-amino-acid chain; its full sequence is MSFDIAKYPTLALVDSTQELRLLPKESLPKLCDELRRYLLDSVSRSSGHFASGLGTVELTVALHYVYNTPFDQLIWDVGHQAYPHKILTGRRDKIGTIRQKGGLHPFPWRGESEYDVLSVGHSSTSISAGIGIAVAAEKEGKNRRTVCVIGDGAITAGMAFEAMNHAGDIRPDMLVVLNDNEMSISENVGALNNHLAQLLSGKLYSSLREGGKKVFSGVPPIKELLKRTEEHIKGMVVPGTLFEELGFNYIGPVDGHDVLGLITTLKNMRDLKGPQFLHIMTKKGRGYEPAEKDPITFHAVPKFDPSSGCLPKSSGGLPSYSKIFGDWLCETAAKDNKLMAITPAMREGSGMVEFSRKFPDRYFDVAIAEQHAVTFAAGLAIGGYKPIVAIYSTFLQRAYDQVLHDVAIQKLPVLFAIDRAGIVGADGQTHQGAFDLSYLRCIPEMVIMTPSDENECRQMLYTGYHYNDGPSAVRYPRGNAVGVELTPLEKLPIGKGIVKRRGEKLAILNFGTLMPEAAKVAESLNATLVDMRFVKPLDEALILEMAASHEALVTVEENAIMGGAGSGVNEVLMAHRKPVPVLNIGLLDFFIPQGTQEEMRAELGLDATGMEAKIKAWLA.

Residues H80 and 121-123 (GHS) contribute to the thiamine diphosphate site. Residue D152 participates in Mg(2+) binding. Residues 153-154 (GA), N181, Y288, and E370 each bind thiamine diphosphate. N181 serves as a coordination point for Mg(2+).

The protein belongs to the transketolase family. DXPS subfamily. Homodimer. Requires Mg(2+) as cofactor. It depends on thiamine diphosphate as a cofactor.

It catalyses the reaction D-glyceraldehyde 3-phosphate + pyruvate + H(+) = 1-deoxy-D-xylulose 5-phosphate + CO2. The protein operates within metabolic intermediate biosynthesis; 1-deoxy-D-xylulose 5-phosphate biosynthesis; 1-deoxy-D-xylulose 5-phosphate from D-glyceraldehyde 3-phosphate and pyruvate: step 1/1. In terms of biological role, catalyzes the acyloin condensation reaction between C atoms 2 and 3 of pyruvate and glyceraldehyde 3-phosphate to yield 1-deoxy-D-xylulose-5-phosphate (DXP). This Escherichia coli O127:H6 (strain E2348/69 / EPEC) protein is 1-deoxy-D-xylulose-5-phosphate synthase.